The sequence spans 395 residues: Receptor-like cytoplasmic kinase 176 (395 aa).

Residues 1-45 (MGNCWGAKISSESPCRSASSPSGGTSKYASNSSVSAASVPPTPRS) are disordered. Composition is skewed to low complexity over residues 10-22 (SSES…SSPS) and 29-39 (ASNSSVSAASV). The region spanning 70–355 (FRPDSVLGEG…EQVVAVLEQL (286 aa)) is the Protein kinase domain. ATP is bound by residues 76 to 84 (LGEGGFGSV) and K108. D205 acts as the Proton acceptor in catalysis. Residues 359–395 (KETGANPQLQKKSSSKNAGSNGSKPSSKGKPANARLV) are disordered. A compositionally biased stretch (low complexity) spans 369–395 (KKSSSKNAGSNGSKPSSKGKPANARLV).

Belongs to the protein kinase superfamily. Ser/Thr protein kinase family. As to quaternary structure, interacts with CERK1.

The enzyme catalyses L-seryl-[protein] + ATP = O-phospho-L-seryl-[protein] + ADP + H(+). It carries out the reaction L-threonyl-[protein] + ATP = O-phospho-L-threonyl-[protein] + ADP + H(+). Its function is as follows. Functions downstream of CERK1 in the microbial peptidoglycans (PGNs) and fungal chitin signaling pathways that mediate innate immunity. Participates in the activation of defense genes during response to PGN and chitin. This is Receptor-like cytoplasmic kinase 176 from Oryza sativa subsp. japonica (Rice).